The primary structure comprises 332 residues: GTPase Obg (332 aa).

The Obg domain occupies 1–159 (MKFLDQAKIY…RWVWLRLKLI (159 aa)). Positions 160 to 328 (ADAGLVGLPN…VLRETLRMIR (169 aa)) constitute an OBG-type G domain. GTP-binding positions include 166 to 173 (GLPNAGKS), 191 to 195 (FTTLH), 213 to 216 (DIPG), 280 to 283 (NKMD), and 309 to 311 (SAA). 2 residues coordinate Mg(2+): Ser-173 and Thr-193.

It belongs to the TRAFAC class OBG-HflX-like GTPase superfamily. OBG GTPase family. Monomer. Mg(2+) serves as cofactor.

It localises to the cytoplasm. Functionally, an essential GTPase which binds GTP, GDP and possibly (p)ppGpp with moderate affinity, with high nucleotide exchange rates and a fairly low GTP hydrolysis rate. Plays a role in control of the cell cycle, stress response, ribosome biogenesis and in those bacteria that undergo differentiation, in morphogenesis control. The polypeptide is GTPase Obg (Acidiphilium cryptum (strain JF-5)).